Reading from the N-terminus, the 199-residue chain is Shikimate kinase (199 aa).

34–39 (GAGKTA) serves as a coordination point for ATP. Position 38 (T38) interacts with Mg(2+). Substrate contacts are provided by D56, R80, and G102. R140 provides a ligand contact to ATP. A substrate-binding site is contributed by R159.

The protein belongs to the shikimate kinase family. As to quaternary structure, monomer. It depends on Mg(2+) as a cofactor.

The protein localises to the cytoplasm. It catalyses the reaction shikimate + ATP = 3-phosphoshikimate + ADP + H(+). It participates in metabolic intermediate biosynthesis; chorismate biosynthesis; chorismate from D-erythrose 4-phosphate and phosphoenolpyruvate: step 5/7. Functionally, catalyzes the specific phosphorylation of the 3-hydroxyl group of shikimic acid using ATP as a cosubstrate. The protein is Shikimate kinase of Cereibacter sphaeroides (strain ATCC 17023 / DSM 158 / JCM 6121 / CCUG 31486 / LMG 2827 / NBRC 12203 / NCIMB 8253 / ATH 2.4.1.) (Rhodobacter sphaeroides).